A 189-amino-acid polypeptide reads, in one-letter code: Elongation factor P (189 aa).

K34 is modified (N6-(3,6-diaminohexanoyl)-5-hydroxylysine).

Belongs to the elongation factor P family. May be beta-lysylated on the epsilon-amino group of Lys-34 by the combined action of EpmA and EpmB, and then hydroxylated on the C5 position of the same residue by EpmC (if this protein is present). Lysylation is critical for the stimulatory effect of EF-P on peptide-bond formation. The lysylation moiety may extend toward the peptidyltransferase center and stabilize the terminal 3-CCA end of the tRNA. Hydroxylation of the C5 position on Lys-34 may allow additional potential stabilizing hydrogen-bond interactions with the P-tRNA.

It localises to the cytoplasm. Its pathway is protein biosynthesis; polypeptide chain elongation. Its function is as follows. Involved in peptide bond synthesis. Alleviates ribosome stalling that occurs when 3 or more consecutive Pro residues or the sequence PPG is present in a protein, possibly by augmenting the peptidyl transferase activity of the ribosome. Modification of Lys-34 is required for alleviation. This chain is Elongation factor P, found in Dichelobacter nodosus (strain VCS1703A).